Consider the following 437-residue polypeptide: Aminopeptidase G (437 aa).

Residues Cys70, His361, and Asn382 contribute to the active site.

It belongs to the peptidase C1 family.

It is found in the cytoplasm. The polypeptide is Aminopeptidase G (pepG) (Lactobacillus delbrueckii subsp. lactis).